The chain runs to 101 residues: Urease subunit beta (101 aa).

Belongs to the urease beta subunit family. In terms of assembly, heterotrimer of UreA (gamma), UreB (beta) and UreC (alpha) subunits. Three heterotrimers associate to form the active enzyme.

It localises to the cytoplasm. The catalysed reaction is urea + 2 H2O + H(+) = hydrogencarbonate + 2 NH4(+). Its pathway is nitrogen metabolism; urea degradation; CO(2) and NH(3) from urea (urease route): step 1/1. This chain is Urease subunit beta, found in Acaryochloris marina (strain MBIC 11017).